A 327-amino-acid polypeptide reads, in one-letter code: Phenylalanine--tRNA ligase alpha subunit (327 aa).

Glu-252 contributes to the Mg(2+) binding site.

It belongs to the class-II aminoacyl-tRNA synthetase family. Phe-tRNA synthetase alpha subunit type 1 subfamily. As to quaternary structure, tetramer of two alpha and two beta subunits. Mg(2+) serves as cofactor.

It localises to the cytoplasm. It carries out the reaction tRNA(Phe) + L-phenylalanine + ATP = L-phenylalanyl-tRNA(Phe) + AMP + diphosphate + H(+). The polypeptide is Phenylalanine--tRNA ligase alpha subunit (Vibrio cholerae serotype O1 (strain ATCC 39541 / Classical Ogawa 395 / O395)).